Consider the following 356-residue polypeptide: MGVLCFGASNILLCAEDSSSVLGLGGFGGGGGEVAAELGCGGGGGFDFFGFGGGAVFPIDSDEFVALLVEKEMDHQPQRGYLEKLELGGLECSWRKDAIDWICKVHSYYNFGPLSLYLAVNYLDRFLSSFNLPHDESWMQQLLSVSCLSLATKMEETVVPLPMDLQVFDAEYVFEARHIKRMELIVMKTLKWRLQAVTPFSFIGYFLDKFNEGKPPSYTLASWCSDLTVGTLKDSRFLSFRPSEIAAAVVLAVLAENQFLVFNSALGESEIPVNKEMVMRCYELMVEKALVKKIRNSNASSSVPHSPITVLDAACFSFRSDDTTLGSSQSNSNNKDYNSQDSAPASKRRRLNTTPI.

Polar residues predominate over residues 325-343 (LGSSQSNSNNKDYNSQDSA). The tract at residues 325 to 356 (LGSSQSNSNNKDYNSQDSAPASKRRRLNTTPI) is disordered. Basic residues predominate over residues 346 to 356 (SKRRRLNTTPI).

This sequence belongs to the cyclin family. Cyclin D subfamily.

This is Cyclin-D2-2 (CYCD2-2) from Oryza sativa subsp. japonica (Rice).